We begin with the raw amino-acid sequence, 177 residues long: Phycocyanin-645 beta chain (177 aa).

Position 18 (Tyr-18) interacts with mesobiliverdin. 3 residues coordinate (2R,3E)-phycocyanobilin: Lys-28, Asn-35, and Asp-39. 15,16-dihydrobiliverdin contacts are provided by Cys-50, Asp-54, and Cys-61. Residues Arg-77, Cys-82, Arg-84, and Asp-85 each coordinate (2R,3E)-phycocyanobilin. Gln-148 serves as a coordination point for 15,16-dihydrobiliverdin. 3 residues coordinate (2R,3E)-phycocyanobilin: Pro-154, Gly-156, and Cys-158.

It belongs to the phycobiliprotein family. As to quaternary structure, heterotetramer of 2 different alpha chains and 2 identical beta chains which form 2 alpha-beta heterodimers within the heterotetramer. In terms of processing, contains two phycocyanobilin chromophores, one mesobiliverdin chromophore and one 15,16-dihydrobiliverdin chromophore with binding mediated by both the alpha and beta subunits.

The protein resides in the plastid. The protein localises to the chloroplast thylakoid membrane. Functionally, light-harvesting photosynthetic tetrapyrrole chromophore-protein from the phycobiliprotein complex. The sequence is that of Phycocyanin-645 beta chain from Chroomonas sp.